We begin with the raw amino-acid sequence, 113 residues long: N-alpha-acetyltransferase 38, NatC auxiliary subunit (113 aa).

Residues 1 to 29 (MAAVLEENGCSRQSSPGAGDSDAEAGDTA) are disordered. The Sm domain maps to 28–106 (TARHKLESLL…IVSIQVELES (79 aa)).

Belongs to the snRNP Sm proteins family. Component of the N-terminal acetyltransferase C (NatC) complex.

It localises to the cytoplasm. The protein localises to the nucleus. Auxillary component of the N-terminal acetyltransferase C (NatC) complex which catalyzes acetylation of N-terminal methionine residues. N-terminal acetylation protects proteins from ubiquitination and degradation by the N-end rule pathway. This chain is N-alpha-acetyltransferase 38, NatC auxiliary subunit (naa38), found in Xenopus tropicalis (Western clawed frog).